A 96-amino-acid polypeptide reads, in one-letter code: Beta-defensin 20 (96 aa).

Positions 1-21 are cleaved as a signal peptide; it reads MKLLQVLLVLLFVALADGAQP. 3 cysteine pairs are disulfide-bonded: cysteine 24–cysteine 52, cysteine 32–cysteine 46, and cysteine 36–cysteine 53.

Belongs to the beta-defensin family.

It is found in the secreted. Functionally, has antibacterial activity. This Mus musculus (Mouse) protein is Beta-defensin 20 (Defb20).